The following is a 102-amino-acid chain: Thioredoxin (102 aa).

The region spanning 2 to 102 is the Thioredoxin domain; it reads VTEIKSLKQL…KAKIVQLVSQ (101 aa). Cysteines 30 and 33 form a disulfide.

Belongs to the thioredoxin family.

Functionally, participates in various redox reactions through the reversible oxidation of its active center dithiol to a disulfide and catalyzes dithiol-disulfide exchange reactions. In Mycoplasma pneumoniae (strain ATCC 29342 / M129 / Subtype 1) (Mycoplasmoides pneumoniae), this protein is Thioredoxin (trxA).